Consider the following 112-residue polypeptide: Large ribosomal subunit protein uL22 (112 aa).

This sequence belongs to the universal ribosomal protein uL22 family. Part of the 50S ribosomal subunit.

In terms of biological role, this protein binds specifically to 23S rRNA; its binding is stimulated by other ribosomal proteins, e.g. L4, L17, and L20. It is important during the early stages of 50S assembly. It makes multiple contacts with different domains of the 23S rRNA in the assembled 50S subunit and ribosome. Its function is as follows. The globular domain of the protein is located near the polypeptide exit tunnel on the outside of the subunit, while an extended beta-hairpin is found that lines the wall of the exit tunnel in the center of the 70S ribosome. The protein is Large ribosomal subunit protein uL22 of Mesoplasma florum (strain ATCC 33453 / NBRC 100688 / NCTC 11704 / L1) (Acholeplasma florum).